The chain runs to 96 residues: Evasin P1074 (96 aa).

The first 28 residues, 1-28, serve as a signal peptide directing secretion; it reads MAFNMITFLQMAVFVVILFNINLHSASA. Cystine bridges form between Cys48-Cys67, Cys52-Cys69, and Cys63-Cys80. N-linked (GlcNAc...) asparagine glycosylation occurs at Asn74.

The protein localises to the secreted. Its function is as follows. Salivary chemokine-binding protein which binds to host chemokines CXCL1 and CXCL8. In Ixodes ricinus (Common tick), this protein is Evasin P1074.